A 213-amino-acid chain; its full sequence is Histone H1.1 (213 aa).

Residues Met1–Ser43 form a disordered region. Ser2 is modified (N-acetylserine). Ser2 and Ser12 each carry phosphoserine. Positions Ala8–Pro18 are enriched in low complexity. At Lys17 the chain carries N6-acetyllysine. The span at Ala20–Pro37 shows a compositional bias: basic residues. Lys36 carries the N6-(beta-hydroxybutyryl)lysine modification. In terms of domain architecture, H15 spans Ala38–Lys111. Position 43 is a phosphoserine (Ser43). Lys54 is modified (N6-(beta-hydroxybutyryl)lysine). At Arg56 the chain carries Citrulline. N6-(beta-hydroxybutyryl)lysine is present on Lys66. Ser67 carries the phosphoserine modification. Position 77 is an N6-acetyllysine (Lys77). Lys87 carries the post-translational modification N6-(beta-hydroxybutyryl)lysine. The residue at position 92 (Lys92) is an N6-(beta-hydroxybutyryl)lysine; alternate. Lys92 carries the N6-acetyllysine; alternate modification. Ser106 carries the post-translational modification Phosphoserine. Lys108 is modified (N6-(beta-hydroxybutyryl)lysine). Positions Lys112–Lys213 are disordered. A compositionally biased stretch (low complexity) spans Thr120–Lys144. Position 121 is an N6-acetyllysine (Lys121). Basic residues-rich tracts occupy residues Lys145–Ala178 and Lys185–Lys213. Thr201 is subject to Phosphothreonine.

This sequence belongs to the histone H1/H5 family. As to quaternary structure, interacts with DFFB. Post-translationally, H1 histones are progressively phosphorylated during the cell cycle, becoming maximally phosphorylated during late G2 phase and M phase, and being dephosphorylated sharply thereafter. In terms of processing, citrullination at Arg-56 (H1R54ci) by PADI4 takes place within the DNA-binding site of H1 and results in its displacement from chromatin and global chromatin decondensation, thereby promoting pluripotency and stem cell maintenance. Hydroxybutyrylation of histones is induced by starvation. As to expression, restricted to thymus, testis and spleen. Present also in lymphocytic and neuronal cells. Increases in testis starting with a low level at day 5 and reaching high concentrations in 20-day old and adult animals.

The protein localises to the nucleus. The protein resides in the chromosome. In terms of biological role, histone H1 protein binds to linker DNA between nucleosomes forming the macromolecular structure known as the chromatin fiber. Histones H1 are necessary for the condensation of nucleosome chains into higher-order structured fibers. Also acts as a regulator of individual gene transcription through chromatin remodeling, nucleosome spacing and DNA methylation. The polypeptide is Histone H1.1 (Mus musculus (Mouse)).